We begin with the raw amino-acid sequence, 555 residues long: 2-isopropylmalate synthase (555 aa).

The 274-residue stretch at 30 to 303 folds into the Pyruvate carboxyltransferase domain; the sequence is PIWCSVDLRD…DPGLDCTDIN (274 aa). Asp-39, His-242, His-244, and Asn-278 together coordinate Mg(2+). The segment at 437–555 is regulatory domain; that stretch reads QPDARIKFVD…VSAANRVIAK (119 aa).

The protein belongs to the alpha-IPM synthase/homocitrate synthase family. LeuA type 2 subfamily. Homodimer. The cofactor is Mg(2+).

The protein resides in the cytoplasm. It carries out the reaction 3-methyl-2-oxobutanoate + acetyl-CoA + H2O = (2S)-2-isopropylmalate + CoA + H(+). The protein operates within amino-acid biosynthesis; L-leucine biosynthesis; L-leucine from 3-methyl-2-oxobutanoate: step 1/4. Catalyzes the condensation of the acetyl group of acetyl-CoA with 3-methyl-2-oxobutanoate (2-ketoisovalerate) to form 3-carboxy-3-hydroxy-4-methylpentanoate (2-isopropylmalate). This chain is 2-isopropylmalate synthase, found in Brucella melitensis biotype 1 (strain ATCC 23456 / CCUG 17765 / NCTC 10094 / 16M).